A 352-amino-acid chain; its full sequence is C-C chemokine receptor type 5 (352 aa).

The Extracellular segment spans residues 1-30 (MDYQVSSPIYDIDYGPSEPCRKIDVKQMGA). Residue Tyr-3 is modified to Sulfotyrosine. O-linked (GalNAc...) serine glycosylation is found at Ser-6 and Ser-7. Tyr-10 and Tyr-14 each carry sulfotyrosine. Cystine bridges form between Cys-20-Cys-269 and Cys-101-Cys-178. Residues 31-58 (QLLPPLYSLVFLFGFVGNMLVVLILINC) form a helical membrane-spanning segment. Over 59 to 68 (KRLKSMTDIY) the chain is Cytoplasmic. A helical transmembrane segment spans residues 69 to 89 (LLNLAISDLLFLFTIPFWAHY). Residues 90–102 (AAGQWDFGNTMCQ) are Extracellular-facing. Residues 103 to 124 (FLTALYFIGFFSGIFFIILLTI) form a helical membrane-spanning segment. Topologically, residues 125 to 141 (DRYLAIVHAVFALKART) are cytoplasmic. Residues 142–166 (VTFGVVTSVITWVVAVFASLPGIIF) form a helical membrane-spanning segment. At 167–198 (TRSQKEGYHYSCSPHFPFSQYRFWKNFETLKM) the chain is on the extracellular side. A helical membrane pass occupies residues 199–218 (VILGLVLPLLVMVICYSGIL). The Cytoplasmic segment spans residues 219–235 (KTLLRCRNEKKRHRAVR). A helical transmembrane segment spans residues 236–260 (LIFTIMIVYFLFWAPYNIVLLINTY). The Extracellular portion of the chain corresponds to 261–277 (PDFFGVNNCNSSNRLDQ). A helical membrane pass occupies residues 278–301 (AMQVTETLGMTHCCVNPIIYAFVG). Residues 302 to 352 (EKFRNYLVIFFQKHIAKRFCKCCSIFQKEAPERANSVYTRSTGEQEISVGL) are Cytoplasmic-facing. Residues Cys-321, Cys-323, and Cys-324 are each lipidated (S-palmitoyl cysteine). Ser-337, Ser-342, and Ser-349 each carry phosphoserine; by BARK1.

This sequence belongs to the G-protein coupled receptor 1 family. In terms of assembly, interacts with PRAF2. Efficient ligand binding to CCL3/MIP-1alpha and CCL4/MIP-1beta requires sulfation, O-glycosylation and sialic acid modifications. Glycosylation on Ser-6 is required for efficient binding of CCL4. Interacts with GRK2. Interacts with ARRB1 and ARRB2. Interacts with CNIH4. Interacts with S100A4; this interaction stimulates T-lymphocyte chemotaxis. Sulfated on at least 2 of the N-terminal tyrosines. Sulfation is required for efficient binding of the chemokines, CCL3 and CCL4. Post-translationally, palmitoylation in the C-terminal is important for cell surface expression. In terms of processing, phosphorylation on serine residues in the C-terminal is stimulated by binding CC chemokines especially by APO-RANTES. O-glycosylated, but not N-glycosylated. Ser-6 appears to be the major site even if Ser-7 may be also O-glycosylated. Also sialylated glycans present which contribute to chemokine binding. Ser-17 may also be glycosylated and, if so, with small moieties such as a T-antigen.

The protein localises to the cell membrane. Its function is as follows. Receptor for a number of inflammatory CC-chemokines including CCL3/MIP-1-alpha, CCL4/MIP-1-beta and RANTES and subsequently transduces a signal by increasing the intracellular calcium ion level. May play a role in the control of granulocytic lineage proliferation or differentiation. Participates in T-lymphocyte migration to the infection site by acting as a chemotactic receptor. This chain is C-C chemokine receptor type 5 (CCR5), found in Saimiri sciureus (Common squirrel monkey).